Consider the following 503-residue polypeptide: uncharacterized protein (503 aa).

A coiled-coil region spans residues 437–465 (LNKDLILENLIETENENDKQEFQKLLRTI).

This sequence belongs to the IIV-6 467R family.

This is an uncharacterized protein from Invertebrate iridescent virus 6 (IIV-6).